The sequence spans 234 residues: Proteasome subunit alpha type-2 (234 aa).

Ala2 carries the post-translational modification N-acetylalanine. Tyr6 carries the post-translational modification Phosphotyrosine. Residues Ser7, Ser14, and Ser16 each carry the phosphoserine modification. Tyr24 is subject to Phosphotyrosine. Lys70 bears the N6-acetyllysine mark. Residues Tyr76 and Tyr121 each carry the phosphotyrosine modification. Lys171 carries the N6-acetyllysine modification.

The protein belongs to the peptidase T1A family. In terms of assembly, the 26S proteasome consists of a 20S proteasome core and two 19S regulatory subunits. The 20S proteasome core is a barrel-shaped complex made of 28 subunits that are arranged in four stacked rings. The two outer rings are each formed by seven alpha subunits, and the two inner rings are formed by seven beta subunits. The proteolytic activity is exerted by three beta-subunits PSMB5, PSMB6 and PSMB7. Post-translationally, phosphorylated on tyrosine residues; which may be important for nuclear import.

It localises to the cytoplasm. It is found in the nucleus. In terms of biological role, component of the 20S core proteasome complex involved in the proteolytic degradation of most intracellular proteins. This complex plays numerous essential roles within the cell by associating with different regulatory particles. Associated with two 19S regulatory particles, forms the 26S proteasome and thus participates in the ATP-dependent degradation of ubiquitinated proteins. The 26S proteasome plays a key role in the maintenance of protein homeostasis by removing misfolded or damaged proteins that could impair cellular functions, and by removing proteins whose functions are no longer required. Associated with the PA200 or PA28, the 20S proteasome mediates ubiquitin-independent protein degradation. This type of proteolysis is required in several pathways including spermatogenesis (20S-PA200 complex) or generation of a subset of MHC class I-presented antigenic peptides (20S-PA28 complex). This Bos taurus (Bovine) protein is Proteasome subunit alpha type-2 (PSMA2).